The following is a 328-amino-acid chain: tRNA-modifying protein YgfZ (328 aa).

Positions 28 and 190 each coordinate folate.

This sequence belongs to the tRNA-modifying YgfZ family.

Its subcellular location is the cytoplasm. Functionally, folate-binding protein involved in regulating the level of ATP-DnaA and in the modification of some tRNAs. It is probably a key factor in regulatory networks that act via tRNA modification, such as initiation of chromosomal replication. The protein is tRNA-modifying protein YgfZ of Sodalis glossinidius (strain morsitans).